The primary structure comprises 138 residues: Cytochrome b5 (138 aa).

In terms of domain architecture, Cytochrome b5 heme-binding spans 14–90 (GRYYRLEEVQ…SETFIIGELH (77 aa)). Heme-binding residues include His49 and His73. Residues 114-136 (SWSNWVIPAIAAIIVALMYRSYM) form a helical membrane-spanning segment.

This sequence belongs to the cytochrome b5 family.

It is found in the endoplasmic reticulum membrane. The protein localises to the microsome membrane. In terms of biological role, cytochrome b5 is a membrane-bound hemoprotein functioning as an electron carrier for several membrane-bound oxygenases. In Gallus gallus (Chicken), this protein is Cytochrome b5 (CYB5A).